The following is a 325-amino-acid chain: BES1/BZR1 homolog protein 4 (325 aa).

The disordered stretch occupies residues 1-21 (MTSGTRMPTWRERENNKRRER). The interval 6-89 (RMPTWREREN…RMEIGGGSAT (84 aa)) is required for DNA-binding. Phosphothreonine is present on Thr169. The segment at 304–325 (ERIHEESGSDDLELTLGNSSTR) is disordered.

This sequence belongs to the BZR/LAT61 family. Phosphorylated. Phosphorylation increases protein degradation.

The protein is BES1/BZR1 homolog protein 4 (BEH4) of Arabidopsis thaliana (Mouse-ear cress).